Reading from the N-terminus, the 78-residue chain is Acyl carrier protein (78 aa).

Residues 1-76 enclose the Carrier domain; sequence MALFEDIQAV…DVVKYIEDNK (76 aa). Position 36 is an O-(pantetheine 4'-phosphoryl)serine (serine 36).

Belongs to the acyl carrier protein (ACP) family. In terms of processing, 4'-phosphopantetheine is transferred from CoA to a specific serine of apo-ACP by AcpS. This modification is essential for activity because fatty acids are bound in thioester linkage to the sulfhydryl of the prosthetic group.

It is found in the cytoplasm. It functions in the pathway lipid metabolism; fatty acid biosynthesis. In terms of biological role, carrier of the growing fatty acid chain in fatty acid biosynthesis. In Helicobacter pylori (strain Shi470), this protein is Acyl carrier protein.